The following is a 148-amino-acid chain: Small ribosomal subunit protein uS13 (148 aa).

This sequence belongs to the universal ribosomal protein uS13 family. As to quaternary structure, part of the 30S ribosomal subunit. Forms a loose heterodimer with protein S19. Forms two bridges to the 50S subunit in the 70S ribosome.

Its function is as follows. Located at the top of the head of the 30S subunit, it contacts several helices of the 16S rRNA. In the 70S ribosome it contacts the 23S rRNA (bridge B1a) and protein L5 of the 50S subunit (bridge B1b), connecting the 2 subunits; these bridges are implicated in subunit movement. In Pyrococcus abyssi (strain GE5 / Orsay), this protein is Small ribosomal subunit protein uS13.